The chain runs to 323 residues: tRNA dimethylallyltransferase (323 aa).

ATP is bound at residue 12–19 (GPTAAGKT). 14–19 (TAAGKT) is a binding site for substrate. Interaction with substrate tRNA regions lie at residues 37 to 40 (DSAL) and 161 to 165 (QRLSR).

Belongs to the IPP transferase family. As to quaternary structure, monomer. It depends on Mg(2+) as a cofactor.

The catalysed reaction is adenosine(37) in tRNA + dimethylallyl diphosphate = N(6)-dimethylallyladenosine(37) in tRNA + diphosphate. Catalyzes the transfer of a dimethylallyl group onto the adenine at position 37 in tRNAs that read codons beginning with uridine, leading to the formation of N6-(dimethylallyl)adenosine (i(6)A). The polypeptide is tRNA dimethylallyltransferase (Pseudomonas fluorescens (strain SBW25)).